The sequence spans 302 residues: MSWIERILNKSNITQTRKASIPEGVWTKCDSCGQVLYRAELERNLEVCPKCDHHMRMTARMRLHTLLDEGSEVELGSELEPKDVLKFKDSKKYKDRLVAAQKATGEKDALVVMKGTLYGMPIVAASFEFAFIGGSMSSVVGARFVRAVEQALEDNCPLVCFSASGGARMQEALMSLMQMAKTSAALAKLQERGLPYISVLTDPTMGGVSASLAMLGDINIAEPKALIGFAGPRVIEQTVREKLPPGFQRSEFLIEKGAIDMIVRRPEMRQTLASILSKLTNQPQPHFDEAAPVSEQENQADA.

Residues 25 to 294 (VWTKCDSCGQ…PHFDEAAPVS (270 aa)) form the CoA carboxyltransferase N-terminal domain. 4 residues coordinate Zn(2+): cysteine 29, cysteine 32, cysteine 48, and cysteine 51. Residues 29-51 (CDSCGQVLYRAELERNLEVCPKC) form a C4-type zinc finger. A disordered region spans residues 281 to 302 (NQPQPHFDEAAPVSEQENQADA).

Belongs to the AccD/PCCB family. In terms of assembly, acetyl-CoA carboxylase is a heterohexamer composed of biotin carboxyl carrier protein (AccB), biotin carboxylase (AccC) and two subunits each of ACCase subunit alpha (AccA) and ACCase subunit beta (AccD). It depends on Zn(2+) as a cofactor.

Its subcellular location is the cytoplasm. The catalysed reaction is N(6)-carboxybiotinyl-L-lysyl-[protein] + acetyl-CoA = N(6)-biotinyl-L-lysyl-[protein] + malonyl-CoA. The protein operates within lipid metabolism; malonyl-CoA biosynthesis; malonyl-CoA from acetyl-CoA: step 1/1. Component of the acetyl coenzyme A carboxylase (ACC) complex. Biotin carboxylase (BC) catalyzes the carboxylation of biotin on its carrier protein (BCCP) and then the CO(2) group is transferred by the transcarboxylase to acetyl-CoA to form malonyl-CoA. This is Acetyl-coenzyme A carboxylase carboxyl transferase subunit beta from Serratia proteamaculans (strain 568).